Consider the following 853-residue polypeptide: DNA mismatch repair protein MutS (853 aa).

614–621 is an ATP binding site; it reads GPNMGGKS.

Belongs to the DNA mismatch repair MutS family.

Functionally, this protein is involved in the repair of mismatches in DNA. It is possible that it carries out the mismatch recognition step. This protein has a weak ATPase activity. The sequence is that of DNA mismatch repair protein MutS from Escherichia coli (strain 55989 / EAEC).